The primary structure comprises 132 residues: ATP synthase epsilon chain 1 (132 aa).

It belongs to the ATPase epsilon chain family. In terms of assembly, F-type ATPases have 2 components, CF(1) - the catalytic core - and CF(0) - the membrane proton channel. CF(1) has five subunits: alpha(3), beta(3), gamma(1), delta(1), epsilon(1). CF(0) has three main subunits: a, b and c.

It localises to the cell inner membrane. Produces ATP from ADP in the presence of a proton gradient across the membrane. The sequence is that of ATP synthase epsilon chain 1 from Cereibacter sphaeroides (strain ATCC 17023 / DSM 158 / JCM 6121 / CCUG 31486 / LMG 2827 / NBRC 12203 / NCIMB 8253 / ATH 2.4.1.) (Rhodobacter sphaeroides).